A 103-amino-acid polypeptide reads, in one-letter code: Large ribosomal subunit protein bL21 (103 aa).

It belongs to the bacterial ribosomal protein bL21 family. As to quaternary structure, part of the 50S ribosomal subunit. Contacts protein L20.

Functionally, this protein binds to 23S rRNA in the presence of protein L20. The polypeptide is Large ribosomal subunit protein bL21 (Methylococcus capsulatus (strain ATCC 33009 / NCIMB 11132 / Bath)).